We begin with the raw amino-acid sequence, 269 residues long: 4-hydroxy-tetrahydrodipicolinate reductase (269 aa).

NAD(+) is bound by residues 9-14 (GCAGKM), D35, 102-104 (GTT), and 128-131 (APNF). The active-site Proton donor/acceptor is the H158. H159 provides a ligand contact to (S)-2,3,4,5-tetrahydrodipicolinate. K162 acts as the Proton donor in catalysis. 168 to 169 (GT) provides a ligand contact to (S)-2,3,4,5-tetrahydrodipicolinate.

It belongs to the DapB family.

It localises to the cytoplasm. It catalyses the reaction (S)-2,3,4,5-tetrahydrodipicolinate + NAD(+) + H2O = (2S,4S)-4-hydroxy-2,3,4,5-tetrahydrodipicolinate + NADH + H(+). The enzyme catalyses (S)-2,3,4,5-tetrahydrodipicolinate + NADP(+) + H2O = (2S,4S)-4-hydroxy-2,3,4,5-tetrahydrodipicolinate + NADPH + H(+). Its pathway is amino-acid biosynthesis; L-lysine biosynthesis via DAP pathway; (S)-tetrahydrodipicolinate from L-aspartate: step 4/4. Catalyzes the conversion of 4-hydroxy-tetrahydrodipicolinate (HTPA) to tetrahydrodipicolinate. In Gloeobacter violaceus (strain ATCC 29082 / PCC 7421), this protein is 4-hydroxy-tetrahydrodipicolinate reductase.